The primary structure comprises 74 residues: Large ribosomal subunit protein uL14c (74 aa).

This sequence belongs to the universal ribosomal protein uL14 family. In terms of assembly, part of the 50S ribosomal subunit.

It is found in the plastid. The protein resides in the chloroplast. Its function is as follows. Binds to 23S rRNA. The chain is Large ribosomal subunit protein uL14c (rpl14) from Oenothera ammophila (Evening primerose).